The chain runs to 292 residues: Nitrogenase iron protein (292 aa).

10 to 17 contributes to the ATP binding site; the sequence is GKGGIGKS. Cys98 contacts [4Fe-4S] cluster. Arg101 carries the post-translational modification ADP-ribosylarginine; by dinitrogenase reductase ADP-ribosyltransferase. Cys133 provides a ligand contact to [4Fe-4S] cluster.

The protein belongs to the NifH/BchL/ChlL family. As to quaternary structure, homodimer. [4Fe-4S] cluster is required as a cofactor. The reversible ADP-ribosylation of Arg-101 inactivates the nitrogenase reductase and regulates nitrogenase activity.

It catalyses the reaction N2 + 8 reduced [2Fe-2S]-[ferredoxin] + 16 ATP + 16 H2O = H2 + 8 oxidized [2Fe-2S]-[ferredoxin] + 2 NH4(+) + 16 ADP + 16 phosphate + 6 H(+). Functionally, the key enzymatic reactions in nitrogen fixation are catalyzed by the nitrogenase complex, which has 2 components: the iron protein and the molybdenum-iron protein. This chain is Nitrogenase iron protein, found in Teredinibacter turnerae (strain ATCC 39867 / T7901).